A 419-amino-acid chain; its full sequence is Acyl-coenzyme A thioesterase 1 (419 aa).

Catalysis depends on charge relay system residues Ser-232, Asp-324, and His-358. Ser-416 is modified (phosphoserine).

This sequence belongs to the C/M/P thioester hydrolase family. Monomer. As to expression, expressed in heart, kidney, brown adipose tissue, white adipose tissue, adrenal gland and muscle.

The protein localises to the cytoplasm. Its subcellular location is the cytosol. It carries out the reaction hexadecanoyl-CoA + H2O = hexadecanoate + CoA + H(+). The catalysed reaction is decanoyl-CoA + H2O = decanoate + CoA + H(+). The enzyme catalyses dodecanoyl-CoA + H2O = dodecanoate + CoA + H(+). It catalyses the reaction tetradecanoyl-CoA + H2O = tetradecanoate + CoA + H(+). It carries out the reaction octadecanoyl-CoA + H2O = octadecanoate + CoA + H(+). The catalysed reaction is eicosanoyl-CoA + H2O = eicosanoate + CoA + H(+). The enzyme catalyses (9Z)-octadecenoyl-CoA + H2O = (9Z)-octadecenoate + CoA + H(+). It catalyses the reaction (9Z)-hexadecenoyl-CoA + H2O = (9Z)-hexadecenoate + CoA + H(+). It carries out the reaction (9E)-octadecenoyl-CoA + H2O = (9E)-octadecenoate + CoA + H(+). It functions in the pathway lipid metabolism; fatty acid metabolism. Functionally, catalyzes the hydrolysis of acyl-CoAs into free fatty acids and coenzyme A (CoASH), regulating their respective intracellular levels. More active towards saturated and unsaturated long chain fatty acyl-CoAs (C12-C20). In Mus musculus (Mouse), this protein is Acyl-coenzyme A thioesterase 1 (Acot1).